Consider the following 201-residue polypeptide: Ras-related protein Rab-9A (201 aa).

Position 2 is an N-acetylalanine (alanine 2). Glycine 17, valine 18, glycine 19, lysine 20, serine 21, serine 22, serine 34, histidine 38, and threonine 39 together coordinate GTP. Residue serine 21 participates in Mg(2+) binding. Positions 31-42 (KFDSQLFHTIGV) match the Switch 1 motif. A Phosphoserine modification is found at serine 34. 2 residues coordinate Mg(2+): threonine 39 and aspartate 62. A Switch 2 motif is present at residues 64–78 (AGQERFRSLRTPFYR). The GTP site is built by glycine 65, asparagine 124, lysine 125, aspartate 127, and lysine 156. A Phosphoserine modification is found at serine 179. Threonine 187 carries the phosphothreonine modification. S-geranylgeranyl cysteine attachment occurs at residues cysteine 200 and cysteine 201.

It belongs to the small GTPase superfamily. Rab family. As to quaternary structure, interacts (preferentially in its GTP-bound form) with GCC2 (via its GRIP domain). Interacts (GTP-bound form) with SGSM1; the GDP-bound form has much lower affinity for SGSM1. Interacts with SGSM2. The GTP-bound form but not the GDP-bound form interacts with HPS4 and the BLOC-3 complex (heterodimer of HPS1 and HPS4) but does not interact with HPS1 alone. Interacts (GTP-bound form) with NDE1; two RAB9A-GTP molecules lie on the opposite sides of the NDE1 homodimer; the interaction leads to RAB9A-dynein motor tethering. Interacts (GTP-bound form) with NDEL1. Requires Mg(2+) as cofactor.

It is found in the cell membrane. Its subcellular location is the endoplasmic reticulum membrane. It localises to the golgi apparatus membrane. The protein resides in the late endosome. The protein localises to the cytoplasmic vesicle. It is found in the phagosome membrane. Its subcellular location is the phagosome. It localises to the cytoplasmic vesicle membrane. The protein resides in the melanosome. The catalysed reaction is GTP + H2O = GDP + phosphate + H(+). Regulated by guanine nucleotide exchange factors (GEFs) which promote the exchange of bound GDP for free GTP. Regulated by GTPase activating proteins (GAPs) which increase the GTP hydrolysis activity. Inhibited by GDP dissociation inhibitors (GDIs). Functionally, the small GTPases Rab are key regulators of intracellular membrane trafficking, from the formation of transport vesicles to their fusion with membranes. Rabs cycle between an inactive GDP-bound form and an active GTP-bound form that is able to recruit to membranes different sets of downstream effectors directly responsible for vesicle formation, movement, tethering and fusion. RAB9A is involved in the transport of proteins between the endosomes and the trans-Golgi network (TGN). Specifically uses NDE1/NDEL1 as an effector to interact with the dynein motor complex in order to control retrograde trafficking of RAB9-associated late endosomes to the TGN. Involved in the recruitment of SGSM2 to melanosomes and is required for the proper trafficking of melanogenic enzymes TYR, TYRP1 and DCT/TYRP2 to melanosomes in melanocytes. The chain is Ras-related protein Rab-9A from Rattus norvegicus (Rat).